We begin with the raw amino-acid sequence, 184 residues long: Large ribosomal subunit protein eL14 (184 aa).

Positions 149–184 are disordered; it reads KNAKKVDSTPAAKKRIEKARAARKAKPTAAKEKSKK. The segment covering 160-174 has biased composition (basic residues); sequence AKKRIEKARAARKAK.

Belongs to the eukaryotic ribosomal protein eL14 family.

This chain is Large ribosomal subunit protein eL14, found in Trypanosoma congolense.